A 363-amino-acid polypeptide reads, in one-letter code: Pyruvate dehydrogenase E1 component subunit beta-1, mitochondrial (363 aa).

A mitochondrion-targeting transit peptide spans 1-29; it reads MLGILRQRAIDGASTLRRTRFALVSARSY. Residue E92 coordinates thiamine diphosphate. 4 residues coordinate K(+): I145, A193, I194, and D196. Residues K247 and K254 each participate in a glycyl lysine isopeptide (Lys-Gly) (interchain with G-Cter in ubiquitin) cross-link.

In terms of assembly, tetramer of 2 alpha and 2 beta subunits. Requires thiamine diphosphate as cofactor. Expressed in roots, immature rosettes, and mature rosettes.

It localises to the mitochondrion matrix. The enzyme catalyses N(6)-[(R)-lipoyl]-L-lysyl-[protein] + pyruvate + H(+) = N(6)-[(R)-S(8)-acetyldihydrolipoyl]-L-lysyl-[protein] + CO2. Functionally, the pyruvate dehydrogenase complex catalyzes the overall conversion of pyruvate to acetyl-CoA and CO(2). It contains multiple copies of three enzymatic components: pyruvate dehydrogenase (E1), dihydrolipoamide acetyltransferase (E2) and lipoamide dehydrogenase (E3). This Arabidopsis thaliana (Mouse-ear cress) protein is Pyruvate dehydrogenase E1 component subunit beta-1, mitochondrial (PDH2).